The following is a 264-amino-acid chain: Indole-3-glycerol phosphate synthase (264 aa).

Belongs to the TrpC family.

The enzyme catalyses 1-(2-carboxyphenylamino)-1-deoxy-D-ribulose 5-phosphate + H(+) = (1S,2R)-1-C-(indol-3-yl)glycerol 3-phosphate + CO2 + H2O. Its pathway is amino-acid biosynthesis; L-tryptophan biosynthesis; L-tryptophan from chorismate: step 4/5. The protein is Indole-3-glycerol phosphate synthase of Azoarcus sp. (strain BH72).